The sequence spans 188 residues: Small ribosomal subunit protein bS16 (188 aa).

The tract at residues 155–188 (IAAASATEEAATEEVAEAAEEAPAAEENNETTEA) is disordered. Acidic residues predominate over residues 164–188 (AATEEVAEAAEEAPAAEENNETTEA).

It belongs to the bacterial ribosomal protein bS16 family.

In Flavobacterium johnsoniae (strain ATCC 17061 / DSM 2064 / JCM 8514 / BCRC 14874 / CCUG 350202 / NBRC 14942 / NCIMB 11054 / UW101) (Cytophaga johnsonae), this protein is Small ribosomal subunit protein bS16.